We begin with the raw amino-acid sequence, 310 residues long: N-acetyl-gamma-glutamyl-phosphate reductase (310 aa).

Residue Cys117 is part of the active site.

The protein belongs to the NAGSA dehydrogenase family. Type 2 subfamily.

The protein localises to the cytoplasm. It carries out the reaction N-acetyl-L-glutamate 5-semialdehyde + phosphate + NADP(+) = N-acetyl-L-glutamyl 5-phosphate + NADPH + H(+). Its pathway is amino-acid biosynthesis; L-arginine biosynthesis; N(2)-acetyl-L-ornithine from L-glutamate: step 3/4. Functionally, catalyzes the NADPH-dependent reduction of N-acetyl-5-glutamyl phosphate to yield N-acetyl-L-glutamate 5-semialdehyde. The polypeptide is N-acetyl-gamma-glutamyl-phosphate reductase (Sinorhizobium medicae (strain WSM419) (Ensifer medicae)).